The chain runs to 231 residues: Large ribosomal subunit protein uL1 (231 aa).

The protein belongs to the universal ribosomal protein uL1 family. In terms of assembly, part of the 50S ribosomal subunit.

Its function is as follows. Binds directly to 23S rRNA. The L1 stalk is quite mobile in the ribosome, and is involved in E site tRNA release. Protein L1 is also a translational repressor protein, it controls the translation of the L11 operon by binding to its mRNA. The protein is Large ribosomal subunit protein uL1 of Francisella philomiragia subsp. philomiragia (strain ATCC 25017 / CCUG 19701 / FSC 153 / O#319-036).